A 530-amino-acid polypeptide reads, in one-letter code: Dual specificity calcium/calmodulin-dependent 3',5'-cyclic nucleotide phosphodiesterase 1A (530 aa).

2 calmodulin-binding regions span residues 24–44 and 114–137; these read TEKMWQRLKGILRCLVKQLEK and EKPRFRSIVHVVQAGIFVERMYRK. The PDEase domain maps to 142–508; it reads VGLAYPEAVI…ERWKELAAQG (367 aa). The active-site Proton donor is histidine 219. Histidine 223, histidine 259, aspartate 260, and aspartate 366 together coordinate Zn(2+). Aspartate 260 is a Mg(2+) binding site. Disordered stretches follow at residues 450–471 and 502–530; these read TKTPSYGASRRSNMKGTTNDGT and KELAAQGEPDPHKNSDLVNAEEKHAETHS. Positions 451 to 471 are enriched in polar residues; it reads KTPSYGASRRSNMKGTTNDGT. Residues 510–530 show a composition bias toward basic and acidic residues; it reads PDPHKNSDLVNAEEKHAETHS.

This sequence belongs to the cyclic nucleotide phosphodiesterase family. PDE1 subfamily. As to quaternary structure, homodimer. Interacts with YWHAZ. It depends on Zn(2+) as a cofactor. Mg(2+) serves as cofactor.

It carries out the reaction a nucleoside 3',5'-cyclic phosphate + H2O = a nucleoside 5'-phosphate + H(+). The catalysed reaction is 3',5'-cyclic GMP + H2O = GMP + H(+). The enzyme catalyses 3',5'-cyclic AMP + H2O = AMP + H(+). With respect to regulation, type I PDE are activated by the binding of calmodulin in the presence of Ca(2+). In terms of biological role, calcium/calmodulin-dependent cyclic nucleotide phosphodiesterase with a dual specificity for the second messengers cGMP and cAMP, which are key regulators of many important physiological processes. Has a higher efficiency with cGMP compared to cAMP. In Bos taurus (Bovine), this protein is Dual specificity calcium/calmodulin-dependent 3',5'-cyclic nucleotide phosphodiesterase 1A.